Reading from the N-terminus, the 97-residue chain is HssA/B-like protein 48 (97 aa).

Disordered regions lie at residues 1–20 (MTLF…SKSS) and 78–97 (GSGY…CCGI).

It belongs to the hssA/B family.

The sequence is that of HssA/B-like protein 48 (hssl48) from Dictyostelium discoideum (Social amoeba).